The chain runs to 355 residues: Probable F-box protein At5g36000 (355 aa).

Positions 1-14 are enriched in basic and acidic residues; the sequence is MNTRSGDAEGDIRG. Residues 1–44 are disordered; it reads MNTRSGDAEGDIRGKMIAPVRDGNGGQKRKLVQSNDIQRDEDGG. Residues 78–124 enclose the F-box; degenerate domain; sequence QSRFSWYEQDIWTYITRFLDGKSLVKLGATNKWFYKIAMEDTVWRFA.

In Arabidopsis thaliana (Mouse-ear cress), this protein is Probable F-box protein At5g36000.